A 108-amino-acid polypeptide reads, in one-letter code: Latartoxin-2c (108 aa).

The N-terminal stretch at 1 to 19 (MKVLVITALCFILLQNVLG) is a signal peptide. Residues 20–42 (EDTYEDLQNYIENLINENQDEAR) constitute a propeptide, removed in mature form. The Processing quadruplet motif motif lies at 39–42 (DEAR). 4 disulfides stabilise this stretch: Cys-44/Cys-61, Cys-51/Cys-72, Cys-60/Cys-84, and Cys-74/Cys-82. The residue at position 107 (Ile-107) is an Isoleucine amide.

The protein belongs to the neurotoxin 19 (CSTX) family. 11 (latartoxin) subfamily. Contains 4 disulfide bonds. In terms of processing, cleavage of the propeptide depends on the processing quadruplet motif (XXXR, with at least one of X being E). Expressed by the venom gland.

The protein localises to the secreted. In terms of biological role, insect toxin. This chain is Latartoxin-2c, found in Lachesana tarabaevi (Spider).